The primary structure comprises 214 residues: uncharacterized protein (214 aa).

In terms of domain architecture, AMMECR1 spans 1 to 194 (MVSANREMAV…MHYSEYLSYV (194 aa)).

This is an uncharacterized protein from Arabidopsis thaliana (Mouse-ear cress).